The following is a 458-amino-acid chain: Phosphoglucosamine mutase (458 aa).

The Phosphoserine intermediate role is filled by Ser-106. Mg(2+) contacts are provided by Ser-106, Asp-247, Asp-249, and Asp-251. Ser-106 is subject to Phosphoserine.

This sequence belongs to the phosphohexose mutase family. Mg(2+) is required as a cofactor. Activated by phosphorylation.

It catalyses the reaction alpha-D-glucosamine 1-phosphate = D-glucosamine 6-phosphate. Catalyzes the conversion of glucosamine-6-phosphate to glucosamine-1-phosphate. This is Phosphoglucosamine mutase from Chlamydia felis (strain Fe/C-56) (Chlamydophila felis).